The chain runs to 103 residues: Large ribosomal subunit protein bL21 (103 aa).

The protein belongs to the bacterial ribosomal protein bL21 family. As to quaternary structure, part of the 50S ribosomal subunit. Contacts protein L20.

In terms of biological role, this protein binds to 23S rRNA in the presence of protein L20. This is Large ribosomal subunit protein bL21 from Nautilia profundicola (strain ATCC BAA-1463 / DSM 18972 / AmH).